Here is a 557-residue protein sequence, read N- to C-terminus: uncharacterized protein (557 aa).

A Helicase ATP-binding domain is found at 70-224; the sequence is KVVEKMNGKA…FNLVSLLKPG (155 aa). 82-90 is an ATP binding site; that stretch reads ADEVGLGKT. The short motif at 175 to 178 is the DEAH box element; that stretch reads DEAH. Positions 363-524 constitute a Helicase C-terminal domain; sequence QVVDLIKKID…NFEEHLHDIL (162 aa).

Belongs to the SNF2/RAD54 helicase family.

This is an uncharacterized protein from Bacillus subtilis (strain 168).